A 114-amino-acid polypeptide reads, in one-letter code: U5-lycotoxin-Ls1a (114 aa).

Positions 1–20 (MKYQILFGVVFLTLLSYCYS) are cleaved as a signal peptide. The propeptide occupies 21 to 45 (EIEDEFENFVDEEMVEADDPFSLAR). Disulfide bonds link C51–C66, C65–C93, and C77–C91.

Belongs to the neurotoxin 19 (CSTX) family. 04 (U1-Lctx) subfamily. In terms of tissue distribution, expressed by the venom gland.

The protein localises to the secreted. This is U5-lycotoxin-Ls1a from Lycosa singoriensis (Wolf spider).